Reading from the N-terminus, the 230-residue chain is uncharacterized protein (230 aa).

The region spanning 2–69 (HRLAKIISNA…KPRLWIYYKP (68 aa)) is the S4 RNA-binding domain. Asp102 acts as the Nucleophile in catalysis.

The protein belongs to the pseudouridine synthase RsuA family.

The enzyme catalyses a uridine in RNA = a pseudouridine in RNA. This is an uncharacterized protein from Rickettsia conorii (strain ATCC VR-613 / Malish 7).